Consider the following 396-residue polypeptide: Cathepsin E (396 aa).

A signal peptide spans 1-19; it reads MKTLLLLLLVLLELGEAQG. Residues 20–53 constitute a propeptide, activation peptide; that stretch reads SLHRVPLRRHPSLKKKLRARSQLSEFWKSHNLDM. The region spanning 78–396 is the Peptidase A1 domain; that stretch reads YFGTISIGSP…NRVGLAPAVP (319 aa). N90 is a glycosylation site (N-linked (GlcNAc...) asparagine). The active site involves D96. Intrachain disulfides connect C109–C114 and C272–C276. The active site involves D281. A disulfide bond links C314 and C351.

It belongs to the peptidase A1 family. As to quaternary structure, homodimer; disulfide-linked. Glycosylated. The nature of the carbohydrate chain varies between cell types. In fibroblasts, the proenzyme contains a high mannose-type oligosaccharide, while the mature enzyme contains a complex-type oligosaccharide. In erythrocyte membranes, both the proenzyme and mature enzyme contain a complex-type oligosaccharide. Post-translationally, two forms are produced by autocatalytic cleavage, form I begins at Ile-54, form II begins at Thr-57. As to expression, expressed abundantly in the stomach, the Clara cells of the lung and activated B-lymphocytes, and at lower levels in lymph nodes, skin and spleen. Not expressed in resting B-lymphocytes.

Its subcellular location is the endosome. It carries out the reaction Similar to cathepsin D, but slightly broader specificity.. Its function is as follows. May have a role in immune function. Probably involved in the processing of antigenic peptides during MHC class II-mediated antigen presentation. May play a role in activation-induced lymphocyte depletion in the thymus, and in neuronal degeneration and glial cell activation in the brain. In Homo sapiens (Human), this protein is Cathepsin E (CTSE).